The chain runs to 270 residues: Meiotic recombination 1 protein (270 aa).

In terms of domain architecture, KH spans 191-225 (EIKLNKTQITFLIGAKGTRIESLREKSGASIKIIP).

Required for chromosome pairing and genetic recombination. MER1 may function to bring the axial elements of the synaptonemal complex corresponding to homologous chromosomes together by initiating recombination. MER1 might be responsible for regulating the MER2 gene and/or gene product. This Saccharomyces cerevisiae (strain ATCC 204508 / S288c) (Baker's yeast) protein is Meiotic recombination 1 protein (MER1).